Consider the following 1197-residue polypeptide: Sensor protein EvgS (1197 aa).

The first 21 residues, 1–21 (MKFLPYIFLLCCGLWSTISFA), serve as a signal peptide directing secretion. The Cytoplasmic portion of the chain corresponds to 22–325 (DEDYIEYRGI…SMTDENGSVR (304 aa)). Residues 326–346 (GVMGDILNIITLQTGLNFSPI) form a helical membrane-spanning segment. Residues 347-537 (TVSHNIHAGT…TWDLYSEQFY (191 aa)) are Periplasmic-facing. The chain crosses the membrane as a helical span at residues 538–558 (IVTTLSVLLVGSSLLWGFYLL). The Cytoplasmic segment spans residues 559 to 1197 (RSVRRRKVIQ…EIAVFCQKND (639 aa)). Residues 718 to 938 (TMSHEIRTPI…TFTITIPVEI (221 aa)) form the Histidine kinase domain. A Phosphohistidine; by autocatalysis modification is found at H721. The 115-residue stretch at 960–1074 (SILIADDHPT…VLKTHLSQLH (115 aa)) folds into the Response regulatory domain. D1009 is modified (4-aspartylphosphate). Residues 1098 to 1197 (DLQLMQEILM…EIAVFCQKND (100 aa)) enclose the HPt domain. Position 1137 is a phosphohistidine (H1137).

Activation requires a sequential transfer of a phosphate group from a His in the primary transmitter domain, to an Asp in the receiver domain and to a His in the secondary transmitter domain.

It is found in the cell inner membrane. The catalysed reaction is ATP + protein L-histidine = ADP + protein N-phospho-L-histidine.. Its function is as follows. Member of the two-component regulatory system EvgS/EvgA. Phosphorylates EvgA via a four-step phosphorelay in response to environmental signals. The sequence is that of Sensor protein EvgS (evgS) from Escherichia coli (strain K12).